A 253-amino-acid polypeptide reads, in one-letter code: Ubiquinone/menaquinone biosynthesis C-methyltransferase UbiE (253 aa).

S-adenosyl-L-methionine contacts are provided by residues T76, D97, and 125 to 126 (NA).

It belongs to the class I-like SAM-binding methyltransferase superfamily. MenG/UbiE family.

It catalyses the reaction a 2-demethylmenaquinol + S-adenosyl-L-methionine = a menaquinol + S-adenosyl-L-homocysteine + H(+). It carries out the reaction a 2-methoxy-6-(all-trans-polyprenyl)benzene-1,4-diol + S-adenosyl-L-methionine = a 5-methoxy-2-methyl-3-(all-trans-polyprenyl)benzene-1,4-diol + S-adenosyl-L-homocysteine + H(+). The protein operates within quinol/quinone metabolism; menaquinone biosynthesis; menaquinol from 1,4-dihydroxy-2-naphthoate: step 2/2. Its pathway is cofactor biosynthesis; ubiquinone biosynthesis. In terms of biological role, methyltransferase required for the conversion of demethylmenaquinol (DMKH2) to menaquinol (MKH2) and the conversion of 2-polyprenyl-6-methoxy-1,4-benzoquinol (DDMQH2) to 2-polyprenyl-3-methyl-6-methoxy-1,4-benzoquinol (DMQH2). The polypeptide is Ubiquinone/menaquinone biosynthesis C-methyltransferase UbiE (Bradyrhizobium sp. (strain BTAi1 / ATCC BAA-1182)).